A 446-amino-acid chain; its full sequence is Hepatocyte nuclear factor 4-beta (446 aa).

Residues 47–122 (NSFCAICGDR…AGMKKEAVQN (76 aa)) constitute a DNA-binding region (nuclear receptor). NR C4-type zinc fingers lie at residues 50-70 (CAICGDRATGKHYGASSCDGC) and 86-110 (CRFSRQCIVDKDKRNQCRYCRLRKC). The region spanning 137-366 (NGSLSINVLT…SLLQELLLGG (230 aa)) is the NR LBD domain.

It belongs to the nuclear hormone receptor family. NR2 subfamily. In terms of assembly, homodimerization is required for HNF4-alpha to bind to its recognition site. In terms of tissue distribution, expressed in liver, kidney, stomach, intestine, lung, ovary, and testis. Not expressed in fat, muscle and brain.

It localises to the nucleus. Transcription factor; binds and activates the promoter for the HNF1-alpha gene. Seems to have a lower DNA binding activity than HNF4-alpha and is a weaker transactivator than the alpha isoform. The protein is Hepatocyte nuclear factor 4-beta (hnf4b) of Xenopus laevis (African clawed frog).